The sequence spans 511 residues: MEEISPAVALTLGLANTMCDSGISSTFDISELENVTDAADMLCNQKRQRYSNGVVDCIMGSVSEEKTLSEVRSLSSDFSVTVQESEEDEPLVSDATIISEGLIVVDARSEISLPDTVETDNGRVLATAIILNETTIEQVPTAEVLIASLNHDVNMEVATSEVVIRLPEENPNVARGSRSVYELECIPLWGTISICGGRSEMEDAVRALPHFLKIPIKMLMGDHEGMSPSLPYLTSHFFGVYDGHGGAQVADYCHDRIHSALAEEIERIKEELCRRNTGEGRQVQWEKVFVDCYLKVDDEVKGKINRPVVGSSDRMVLEAVSPETVGSTAVVALVCSSHIIVSNCGDSRAVLLRGKDSMPLSVDHKPDREDEYARIEKAGGKVIQWQGARVSGVLAMSRSIGDQYLEPFVIPDPEVTFMPRAREDECLILASDGLWDVMSNQEACDFARRRILAWHKKNGALPLAERGVGEDQACQAAAEYLSKLAIQMGSKDNISIIVIDLKAQRKFKTRS.

The first 19 residues, methionine 1–cysteine 19, serve as a signal peptide directing secretion. The PPM-type phosphatase domain maps to leucine 188–leucine 501. 4 residues coordinate Mn(2+): aspartate 242, glycine 243, aspartate 432, and aspartate 492.

This sequence belongs to the PP2C family. Interacts with PYL13. Mg(2+) is required as a cofactor. Requires Mn(2+) as cofactor. In terms of tissue distribution, expressed in seeds.

It carries out the reaction O-phospho-L-seryl-[protein] + H2O = L-seryl-[protein] + phosphate. The enzyme catalyses O-phospho-L-threonyl-[protein] + H2O = L-threonyl-[protein] + phosphate. Its function is as follows. Key component and repressor of the abscisic acid (ABA) signaling pathway that regulates numerous ABA responses, such as stomatal closure, seed germination and inhibition of vegetative growth. The chain is Protein phosphatase 2C 7 (HAB2) from Arabidopsis thaliana (Mouse-ear cress).